The chain runs to 552 residues: MAGIQQQQLVNDTLPASWDGSSKRTAAVNVEGHPRPCIDHELKDPSHQKSGWRKFLSYVGPGFLVSLAYLDPGNLETDLQAGANHRYELLWVVLVGLIFALTIQSLAANLGVSTGKHLSELCRAEYPRHVKYCLWLLAEIAVMAADIPEVIGTAFALNILFNIPVWFGVLCTGCSTLLLLGLQKYGVRKLELLIAVLVFVMAACFFGEMRYVKPPATDVLKGMFIPKLSGQGSTGDAIALLGALVMPHNLFLHSALVLSRKTPNSVRGINDACRYFLIESGLALFVAFLINLAVISVSGTVCSAQNLSSENADRCGDLTLNSASFLLQNVLGKSSSKIYAIAVLASGQSSTITGTYAGQYIMEGFLELRMRKWIRNLVTRCIAITPSLIVSIIGGSSGAGRLIIIASMILSFELPFALIPLLKFSSSTTKMGPHKNSIYIIVLSWILGLGIIGINIYYLSTGFVGWLIDNNLPKVANVFIGIIVFPLMAIYILAVIYLTFRKDTVVTFMEPNKNDPQQQTNMENGLAKSTEGPEMVDRAPYREDLADIPLPE.

Residue asparagine 11 is glycosylated (N-linked (GlcNAc...) asparagine). Transmembrane regions (helical) follow at residues 55–75 (FLSYVGPGFLVSLAYLDPGNL), 88–108 (ELLWVVLVGLIFALTIQSLAA), 133–155 (CLWLLAEIAVMAADIPEVIGTAF), 159–181 (ILFNIPVWFGVLCTGCSTLLLLG), 189–209 (KLELLIAVLVFVMAACFFGEM), 238–258 (IALLGALVMPHNLFLHSALVL), and 275–295 (YFLIESGLALFVAFLINLAVI). The N-linked (GlcNAc...) asparagine glycan is linked to asparagine 306. A run of 5 helical transmembrane segments spans residues 338 to 358 (IYAIAVLASGQSSTITGTYAG), 377 to 397 (LVTRCIAITPSLIVSIIGGSS), 402 to 422 (LIIIASMILSFELPFALIPLL), 438 to 458 (IYIIVLSWILGLGIIGINIYY), and 478 to 498 (VFIGIIVFPLMAIYILAVIYL). Residues 511 to 552 (PNKNDPQQQTNMENGLAKSTEGPEMVDRAPYREDLADIPLPE) are disordered. Over residues 514–523 (NDPQQQTNME) the composition is skewed to polar residues. The segment covering 535 to 545 (MVDRAPYREDL) has biased composition (basic and acidic residues).

The protein belongs to the NRAMP (TC 2.A.55) family.

The protein resides in the membrane. Its function is as follows. Probable divalent metal transporter. The sequence is that of Metal transporter Nramp6.1 from Populus trichocarpa (Western balsam poplar).